The sequence spans 138 residues: Small ribosomal subunit protein uS11 (138 aa).

Positions 1–12 (MPPKKANAAGPK) are enriched in low complexity. The segment at 1 to 23 (MPPKKANAAGPKKGQKTRKREKK) is disordered. The segment covering 13–22 (KGQKTRKREK) has biased composition (basic residues).

It belongs to the universal ribosomal protein uS11 family. As to quaternary structure, part of the 30S ribosomal subunit. Interacts with proteins S7 and S18. Binds to IF-3.

Functionally, located on the platform of the 30S subunit, it bridges several disparate RNA helices of the 16S rRNA. Forms part of the Shine-Dalgarno cleft in the 70S ribosome. This Mycobacterium leprae (strain Br4923) protein is Small ribosomal subunit protein uS11.